The primary structure comprises 139 residues: Asp-hemolysin (139 aa).

A propeptide spanning residues Met-1 to Gln-5 is cleaved from the precursor. The segment at Thr-47–Gly-79 is disordered. A compositionally biased stretch (polar residues) spans Val-62–Gly-75.

The protein belongs to the aegerolysin family.

The protein is Asp-hemolysin of Aspergillus fumigatus (strain ATCC MYA-4609 / CBS 101355 / FGSC A1100 / Af293) (Neosartorya fumigata).